Consider the following 485-residue polypeptide: Putative phosphoethanolamine transferase HI_1064 (485 aa).

4 helical membrane passes run 33-53 (ILPA…ILIG), 55-75 (GMFT…ILLL), 81-101 (SFYF…PTGL), and 125-145 (FLLQ…ILIF).

It belongs to the phosphoethanolamine transferase family.

The protein localises to the cell membrane. In Haemophilus influenzae (strain ATCC 51907 / DSM 11121 / KW20 / Rd), this protein is Putative phosphoethanolamine transferase HI_1064.